The chain runs to 489 residues: Ubiquitin-like-specific protease ESD4 (489 aa).

Residues 43-66 (AMSEDSGKPASSNPTISRISRYPD) are disordered. A compositionally biased stretch (polar residues) spans 51 to 60 (PASSNPTISR). Residues 200 to 223 (ASSLEAYRKLMQSAEKRNSKLEAL) adopt a coiled-coil conformation. Active-site residues include H380, D397, and C448.

It belongs to the peptidase C48 family. As to quaternary structure, interacts with NUA (via N-terminus). Interacts with KIN10. As to expression, expressed in seedlings, leaves, shoots, flowers and roots.

The protein resides in the nucleus membrane. The catalysed reaction is Hydrolysis of the alpha-linked peptide bond in the sequence Gly-Gly-|-Ala-Thr-Tyr at the C-terminal end of the small ubiquitin-like modifier (SUMO) propeptide, Smt3, leading to the mature form of the protein. A second reaction involves the cleavage of an epsilon-linked peptide bond between the C-terminal glycine of the mature SUMO and the lysine epsilon-amino group of the target protein.. Its activity is regulated as follows. Inhibited by thiol reagent and N-ethylmaleimide, but not by ubiquitin aldehyde, pepstatin A or benzamidine HCl. Functionally, protease that catalyzes two essential functions in the SUMO pathway: processing of full-length SUMOs to their mature forms and deconjugation of SUMO from targeted proteins. Cleaves precursors of SUM1 and SUM2, but not of SUM3 or SUM5. Able to release SUM1 and SUM2 from conjugates, but unable to cleave SUM3. Acts predominantly as an isopeptidase, cleaving SUMO-conjugated proteins better than SUMO peptides. Plays an important role in the control of flowering time. This is Ubiquitin-like-specific protease ESD4 (ESD4) from Arabidopsis thaliana (Mouse-ear cress).